Consider the following 567-residue polypeptide: Hexose transporter HXT11 (567 aa).

The span at 1 to 22 (MSGVNNTSANELSTTMSNSNSA) shows a compositional bias: polar residues. Positions 1 to 45 (MSGVNNTSANELSTTMSNSNSAVGAPSVKTEHGDSKNSLNLDANE) are disordered. At 1–56 (MSGVNNTSANELSTTMSNSNSAVGAPSVKTEHGDSKNSLNLDANEPPIDLPQKPLS) the chain is on the cytoplasmic side. The helical transmembrane segment at 57-77 (AYTTVAILCLMIAFGGFIFGW) threads the bilayer. The Extracellular segment spans residues 78 to 112 (DTGTISGFVNLSDFIRRFGQKNDKGTYYLSKVRMG). The N-linked (GlcNAc...) asparagine glycan is linked to N87. Residues 113-133 (LIVSIFNIGCAIGGIVLSKVG) form a helical membrane-spanning segment. Residues 134 to 139 (DIYGRR) lie on the Cytoplasmic side of the membrane. Residues 140-160 (IGLITVTAIYVVGILIQITSI) form a helical membrane-spanning segment. The Extracellular portion of the chain corresponds to 161–170 (NKWYQYFIGR). Residues 171–191 (IISGLGVGGIAVLSPMLISEV) traverse the membrane as a helical segment. The Cytoplasmic segment spans residues 192-197 (APKHIR). The chain crosses the membrane as a helical span at residues 198–218 (GTLVQLYQLMGTMGIFLGYCT). The Extracellular segment spans residues 219 to 232 (NYGTKNYHNATQWR). A glycan (N-linked (GlcNAc...) asparagine) is linked at N227. The helical transmembrane segment at 233 to 253 (VGLGLCFAWATFMVSGMMFVP) threads the bilayer. Residues 254–336 (ESPRYLIEVG…IQSLQQLTGD (83 aa)) are Cytoplasmic-facing. A helical membrane pass occupies residues 337–353 (NYFFYYGTTIFKSVGLK). At 354–359 (DSFQTS) the chain is on the extracellular side. A helical transmembrane segment spans residues 360–377 (IIIGVVNFFSSFIAVYTI). Topologically, residues 378–384 (ERFGRRT) are cytoplasmic. Residues 385-405 (CLLWGAASMLCCFAVFASVGV) traverse the membrane as a helical segment. Topologically, residues 406 to 429 (TKLWPQGSSHQDITSQGAGNCMIV) are extracellular. The chain crosses the membrane as a helical span at residues 430-450 (FTMFFIFSFATTWAGGCYVIV). Topologically, residues 451-467 (SETFPLRVKSRGMAIAT) are cytoplasmic. Residues 468–488 (AANWMWGFLISFFTPFITGAI) form a helical membrane-spanning segment. Residue N489 is a topological domain, extracellular. A helical transmembrane segment spans residues 490-510 (FYYGYVFLGCLVFAYFYVFFF). At 511–567 (VPETKGLTLEEVNTMWLEGVPAWKSASWVPPERRTADYDADAIDHDNRPIYKRFFSS) the chain is on the cytoplasmic side.

This sequence belongs to the major facilitator superfamily. Sugar transporter (TC 2.A.1.1) family.

It is found in the membrane. In terms of biological role, probable glucose transporter. The chain is Hexose transporter HXT11 (HXT11) from Saccharomyces cerevisiae (strain ATCC 204508 / S288c) (Baker's yeast).